Consider the following 123-residue polypeptide: Large ribosomal subunit protein eL8 (123 aa).

It belongs to the eukaryotic ribosomal protein eL8 family. As to quaternary structure, part of the 50S ribosomal subunit. Probably part of the RNase P complex.

It localises to the cytoplasm. In terms of biological role, multifunctional RNA-binding protein that recognizes the K-turn motif in ribosomal RNA, the RNA component of RNase P, box H/ACA, box C/D and box C'/D' sRNAs. This Methanothermobacter thermautotrophicus (strain ATCC 29096 / DSM 1053 / JCM 10044 / NBRC 100330 / Delta H) (Methanobacterium thermoautotrophicum) protein is Large ribosomal subunit protein eL8.